The sequence spans 225 residues: Probable manganese catalase (225 aa).

E37 is a Mn(2+) binding site. Ca(2+) is bound by residues D58 and D62. Mn(2+) is bound by residues E67, H70, E138, and H171. S204 lines the Ca(2+) pocket. The disordered stretch occupies residues 204–225 (STPGRYVQDPNPTEPSFSNPRR). A compositionally biased stretch (polar residues) spans 213–225 (PNPTEPSFSNPRR).

Belongs to the manganese catalase family. Requires Ca(2+) as cofactor. Mn(2+) serves as cofactor.

It carries out the reaction 2 H2O2 = O2 + 2 H2O. Catalyzes the decomposition of hydrogen peroxide into water and oxygen. This Clostridium acetobutylicum (strain ATCC 824 / DSM 792 / JCM 1419 / IAM 19013 / LMG 5710 / NBRC 13948 / NRRL B-527 / VKM B-1787 / 2291 / W) protein is Probable manganese catalase.